Reading from the N-terminus, the 166-residue chain is Lipoprotein signal peptidase (166 aa).

A run of 4 helical transmembrane segments spans residues 9 to 29 (ASGALAPWLGISLIVILFDQL), 45 to 65 (ALTSFFSLVLVYNRGAAFGFL), 71 to 91 (WQRWAFTALGIGATLVICFLL), and 100 to 120 (FSLSLALILGGALGNVIDRLV). Catalysis depends on residues D126 and D144. Residues 135–155 (WHFPAFNLADSAITVGAVLLV) traverse the membrane as a helical segment.

Belongs to the peptidase A8 family.

The protein localises to the cell inner membrane. It catalyses the reaction Release of signal peptides from bacterial membrane prolipoproteins. Hydrolyzes -Xaa-Yaa-Zaa-|-(S,diacylglyceryl)Cys-, in which Xaa is hydrophobic (preferably Leu), and Yaa (Ala or Ser) and Zaa (Gly or Ala) have small, neutral side chains.. Its pathway is protein modification; lipoprotein biosynthesis (signal peptide cleavage). Its function is as follows. This protein specifically catalyzes the removal of signal peptides from prolipoproteins. The sequence is that of Lipoprotein signal peptidase from Burkholderia ambifaria (strain MC40-6).